Here is a 471-residue protein sequence, read N- to C-terminus: L-amino acid dehydrogenase (471 aa).

Residue G31 coordinates Mg(2+). S33 contacts FAD. G34 serves as a coordination point for Mg(2+). Residues E52, R60, and V256 each contribute to the FAD site. Residue A283 coordinates Mg(2+). F453 contacts FAD.

The protein belongs to the flavin monoamine oxidase family. The cofactor is FAD. It depends on Mg(2+) as a cofactor.

It localises to the cellular thylakoid membrane. The catalysed reaction is a plastoquinone + an L-alpha-amino acid + H2O = a plastoquinol + a 2-oxocarboxylate + NH4(+). It carries out the reaction a plastoquinone + L-arginine + H2O = a plastoquinol + 5-guanidino-2-oxopentanoate + NH4(+). The protein operates within amino-acid degradation; L-arginine degradation. With respect to regulation, inhibited by Ca(2+) and other cations such as Ni(2+), Co(2+) and Zn(2+). The inhibition by o-phenanthroline and salicylhydroxamic acid suggests the presence of a metal cofactor besides FAD in the enzyme. The L-arginine-stimulated O(2) consumption involving slr0782 is inhibited by inhibitors of the respiratory electron transport chain, such as KCN and 2,5-dibromo-3-methyl-6-isopropyl-p-benzoquinone, which indicates a participation of the cytochrome b6/f complex and of a cytochrome oxidase. Its function is as follows. L-amino acid dehydrogenase with broad substrate specificity. Catalyzes the oxidative deamination of various L-amino acids, L-Arg and L-Cys being the best substrates in vitro. Likely functions mainly as an L-arginine dehydrogenase in vivo. Probably feeds electrons from L-arginine oxidation and also from the oxidation of other L-amino acids into the respiratory electron transport chain associated to the thylakoid membrane, and does not directly interact with molecular oxygen but donates electrons to the plastoquinone pool. Cannot use D-amino acids as substrates. The polypeptide is L-amino acid dehydrogenase (Synechocystis sp. (strain ATCC 27184 / PCC 6803 / Kazusa)).